Here is a 176-residue protein sequence, read N- to C-terminus: Pituitary adenylate cyclase-activating polypeptide (176 aa).

An N-terminal signal peptide occupies residues 1–24 (MTMCSGARLALLVYGILMHSSVYG). The propeptide occupies 25 to 80 (SPAASGLRFPGIRPENEAYDEDGNPQQDFYDSEPPGVGSPASALRDAYALYYPAEE). Disordered stretches follow at residues 36–62 (IRPE…PGVG) and 115–134 (GTPG…RHSD). The tract at residues 150 to 158 (VKKYLAAVL) is important for receptor binding. Position 158 is a leucine amide (L158). K169 bears the Lysine amide mark. Residues 173–176 (IPYL) constitute a propeptide that is removed on maturation.

Belongs to the glucagon family.

The protein localises to the secreted. Its function is as follows. PACAP is a neuropeptide involved in diverse array of physiological processes through activating the PACAP subfamily of class B1 G protein-coupled receptors: VIP receptor 1 (VIPR1), VIP receptor 2 (VIPR2), and PACAP type I receptor (ADCYAP1R1). Exerts neuroprotective and general cytoprotective effects due to anti-apoptotic, anti-inflammatory, and antioxidant actions. Promotes neuron projection development through the RAPGEF2/Rap1/B-Raf/ERK pathway. In chromaffin cells, induces long-lasting increase of intracellular calcium concentrations and neuroendocrine secretion. Involved in the control of glucose homeostasis, induces insulin secretion by pancreatic beta cells. PACAP exists in two bioactive forms from proteolysis of the same precursor protein, PACAP27 and PACAP38, which differ by eleven amino acid residues in the C-terminus. This is Pituitary adenylate cyclase-activating polypeptide (ADCYAP1) from Ovis aries (Sheep).